The chain runs to 192 residues: MKRRLYLSSSSPRRKELLDQAGIPFDLVNAPVEETGLPNESPESFVLRMAVEKALSGFNKVPGKNVWVLGSDTIILKDGKVFGKPKHKMDAYRMLMSFSGEEHTVMTSIAIVNDGAVYSDVCQTNVFFRPISDSEFEQYWATGEAEDKAGAYGIQGQAAKFIEKIEGSYSAVMGLPLYELDKLLRESNFYSE.

The active-site Proton acceptor is Asp72.

It belongs to the Maf family. YhdE subfamily. A divalent metal cation serves as cofactor.

It is found in the cytoplasm. It carries out the reaction dTTP + H2O = dTMP + diphosphate + H(+). It catalyses the reaction UTP + H2O = UMP + diphosphate + H(+). Functionally, nucleoside triphosphate pyrophosphatase that hydrolyzes dTTP and UTP. May have a dual role in cell division arrest and in preventing the incorporation of modified nucleotides into cellular nucleic acids. The protein is dTTP/UTP pyrophosphatase of Hydrogenovibrio crunogenus (strain DSM 25203 / XCL-2) (Thiomicrospira crunogena).